Here is a 113-residue protein sequence, read N- to C-terminus: Beta-microseminoprotein (113 aa).

The first 20 residues, 1 to 20 (MKARLGSLLVLATLVTASNA), serve as a signal peptide directing secretion. 5 cysteine pairs are disulfide-bonded: C22-C69, C38-C61, C56-C92, C59-C68, and C83-C106.

It belongs to the beta-microseminoprotein family. In terms of assembly, homodimer; Interacts with PI16.

The protein localises to the secreted. This is Beta-microseminoprotein (Msmb) from Rattus norvegicus (Rat).